Here is a 127-residue protein sequence, read N- to C-terminus: Translation initiation factor 5A (127 aa).

K35 bears the Hypusine mark.

This sequence belongs to the eIF-5A family.

The protein localises to the cytoplasm. Its function is as follows. Functions by promoting the formation of the first peptide bond. In Methanospirillum hungatei JF-1 (strain ATCC 27890 / DSM 864 / NBRC 100397 / JF-1), this protein is Translation initiation factor 5A.